A 319-amino-acid chain; its full sequence is tRNA N6-adenosine threonylcarbamoyltransferase (319 aa).

Residues His110 and His114 each coordinate Fe cation. Substrate contacts are provided by residues 132–136, Asp165, Gly178, Asp182, and Asn271; that span reads VVSGG. Asp300 is a binding site for Fe cation.

It belongs to the KAE1 / TsaD family. Fe(2+) serves as cofactor.

The protein resides in the cytoplasm. It carries out the reaction L-threonylcarbamoyladenylate + adenosine(37) in tRNA = N(6)-L-threonylcarbamoyladenosine(37) in tRNA + AMP + H(+). Its function is as follows. Required for the formation of a threonylcarbamoyl group on adenosine at position 37 (t(6)A37) in tRNAs that read codons beginning with adenine. Is involved in the transfer of the threonylcarbamoyl moiety of threonylcarbamoyl-AMP (TC-AMP) to the N6 group of A37, together with TsaE and TsaB. TsaD likely plays a direct catalytic role in this reaction. This Mycoplasma capricolum subsp. capricolum (strain California kid / ATCC 27343 / NCTC 10154) protein is tRNA N6-adenosine threonylcarbamoyltransferase.